The sequence spans 438 residues: Trigger factor (438 aa).

A PPIase FKBP-type domain is found at 163–248 (GDIITIDYEG…VKEIKRKELA (86 aa)).

Belongs to the FKBP-type PPIase family. Tig subfamily.

The protein localises to the cytoplasm. The catalysed reaction is [protein]-peptidylproline (omega=180) = [protein]-peptidylproline (omega=0). Involved in protein export. Acts as a chaperone by maintaining the newly synthesized protein in an open conformation. Functions as a peptidyl-prolyl cis-trans isomerase. The chain is Trigger factor from Desulforudis audaxviator (strain MP104C).